We begin with the raw amino-acid sequence, 353 residues long: Glycerol-3-phosphate dehydrogenase [NAD(+)], cytoplasmic (353 aa).

Blocked amino end (Ala) is present on alanine 2. NAD(+) contacts are provided by residues glycine 11 to glycine 16, phenylalanine 98, lysine 121, and alanine 155. Lysine 121 lines the substrate pocket. The active-site Proton acceptor is lysine 206. 2 residues coordinate NAD(+): arginine 270 and glutamine 299. Arginine 270–asparagine 271 contacts substrate.

The protein belongs to the NAD-dependent glycerol-3-phosphate dehydrogenase family. As to quaternary structure, homodimer.

It is found in the cytoplasm. The enzyme catalyses sn-glycerol 3-phosphate + NAD(+) = dihydroxyacetone phosphate + NADH + H(+). It participates in phospholipid metabolism; alpha-glycerophosphate cycle. This Drosophila virilis (Fruit fly) protein is Glycerol-3-phosphate dehydrogenase [NAD(+)], cytoplasmic.